A 35-amino-acid chain; its full sequence is Photosystem II reaction center protein T (35 aa).

A helical membrane pass occupies residues 3-23 (ALVYTFLLVSTLGIIFFAIFF).

The protein belongs to the PsbT family. PSII is composed of 1 copy each of membrane proteins PsbA, PsbB, PsbC, PsbD, PsbE, PsbF, PsbH, PsbI, PsbJ, PsbK, PsbL, PsbM, PsbT, PsbY, PsbZ, Psb30/Ycf12, at least 3 peripheral proteins of the oxygen-evolving complex and a large number of cofactors. It forms dimeric complexes.

It localises to the plastid. The protein resides in the chloroplast thylakoid membrane. Found at the monomer-monomer interface of the photosystem II (PS II) dimer, plays a role in assembly and dimerization of PSII. PSII is a light-driven water plastoquinone oxidoreductase, using light energy to abstract electrons from H(2)O, generating a proton gradient subsequently used for ATP formation. This chain is Photosystem II reaction center protein T, found in Stangeria eriopus (Natal grass cycad).